A 261-amino-acid chain; its full sequence is tRNA pseudouridine synthase A (261 aa).

Asp51 (nucleophile) is an active-site residue. Tyr109 serves as a coordination point for substrate.

It belongs to the tRNA pseudouridine synthase TruA family. Homodimer.

It carries out the reaction uridine(38/39/40) in tRNA = pseudouridine(38/39/40) in tRNA. Functionally, formation of pseudouridine at positions 38, 39 and 40 in the anticodon stem and loop of transfer RNAs. This is tRNA pseudouridine synthase A from Shewanella amazonensis (strain ATCC BAA-1098 / SB2B).